The sequence spans 467 residues: Ribosomal protein uS12 methylthiotransferase RimO (467 aa).

Positions 1-27 are disordered; it reads MTSNPPDLRPDLAPKPTFGTAPRPDQP. One can recognise an MTTase N-terminal domain in the interval 27-137; it reads PTLGMVSLGC…VLDAVHAAVP (111 aa). Residues Cys-36, Cys-72, Cys-101, Cys-168, Cys-172, and Cys-175 each coordinate [4Fe-4S] cluster. Residues 154–397 form the Radical SAM core domain; that stretch reads LTPRHFSYLK…MEKAQAISEA (244 aa). Positions 400–467 constitute a TRAM domain; that stretch reads ASKVGQTLQV…GEYDLWGALR (68 aa).

The protein belongs to the methylthiotransferase family. RimO subfamily. The cofactor is [4Fe-4S] cluster.

Its subcellular location is the cytoplasm. The catalysed reaction is L-aspartate(89)-[ribosomal protein uS12]-hydrogen + (sulfur carrier)-SH + AH2 + 2 S-adenosyl-L-methionine = 3-methylsulfanyl-L-aspartate(89)-[ribosomal protein uS12]-hydrogen + (sulfur carrier)-H + 5'-deoxyadenosine + L-methionine + A + S-adenosyl-L-homocysteine + 2 H(+). Its function is as follows. Catalyzes the methylthiolation of an aspartic acid residue of ribosomal protein uS12. This chain is Ribosomal protein uS12 methylthiotransferase RimO, found in Ruegeria sp. (strain TM1040) (Silicibacter sp.).